Reading from the N-terminus, the 410-residue chain is Cytochrome P450 monooxygenase mpsF (410 aa).

C355 lines the heme pocket.

This sequence belongs to the cytochrome P450 family. Requires heme as cofactor.

It participates in secondary metabolite biosynthesis. Cytochrome P450 monooxygenase; part of the gene cluster that mediates the biosynthesis of macrophasetins, 3-decalinoyltetramic acids (DTAs) which feature a tetramate (pyrrolidine-2,4-dione) unit connected to a decalin fragment and that have potent bioactivities. The PKS-NRPS mpsA together with its associated enoylreductase partner mpsG incorporate one unit of acetyl-CoA, seven units of malonyl-CoA, and one unit of L-alanine to assemble the linear tetramic acid intermediate corresponding to the backbone of macrophasetins. Without the Diels-Alderase mpsD, the mpsA/G product can undergo the non-enzymatic intramolecular Diels-Alder (IMDA) reaction to generate both macrophasetin A and macrophasetin B. Catalyzed by mpsD, the linear tetramic acid intermediate is thoroughly converted to macrophasetin A via the endo-IMDA reaction in a regioselective and stereoselective manner. Finally, the cytochrome P450 monooxygenase mpsF catalyzes the hydroxylation at C20 to yield the end product macrophasetin C. This is Cytochrome P450 monooxygenase mpsF from Macrophomina phaseolina (strain MS6) (Charcoal rot fungus).